A 197-amino-acid chain; its full sequence is Recombination protein RecR (197 aa).

A C4-type zinc finger spans residues 56-71 (CQQCRNLSETEICGFC). One can recognise a Toprim domain in the interval 79–174 (DQLCIVETPT…SVTRLAQGIP (96 aa)).

This sequence belongs to the RecR family.

May play a role in DNA repair. It seems to be involved in an RecBC-independent recombinational process of DNA repair. It may act with RecF and RecO. In Hydrogenovibrio crunogenus (strain DSM 25203 / XCL-2) (Thiomicrospira crunogena), this protein is Recombination protein RecR.